The primary structure comprises 309 residues: Calponin-2 (309 aa).

Serine 2 is subject to N-acetylserine. Residues lysine 8 and lysine 25 each carry the N6-acetyllysine modification. In terms of domain architecture, Calponin-homology (CH) spans 28-132; it reads PQKEAELRTW…SLLALAGKAK (105 aa). Serine 138 is subject to Phosphoserine. Calponin-like repeat units lie at residues 166 to 191, 206 to 231, and 245 to 269; these read IGLQMGTNKCASQSGMTAYGTRRHLY, ISLQMGTNKCASQVGMTAPGTRRHIY, and MSLQMGYTQGANQSGQVFGLGRQIY. Positions 283-309 are disordered; sequence APSGTGDCPDPGEVPEYPPYYQEEAGY.

Belongs to the calponin family. Heart and smooth muscle.

Thin filament-associated protein that is implicated in the regulation and modulation of smooth muscle contraction. It is capable of binding to actin, calmodulin and tropomyosin. The interaction of calponin with actin inhibits the actomyosin Mg-ATPase activity. In Homo sapiens (Human), this protein is Calponin-2 (CNN2).